Consider the following 1252-residue polypeptide: Immunoglobulin superfamily DCC subclass member 4 (1252 aa).

Residues 1–22 (MARADTGRGLLVLTFCLLSARG) form the signal peptide. Residues 23-956 (ELPLPQETTV…SDSLDVHAVT (934 aa)) lie on the Extracellular side of the membrane. Ig-like domains are found at residues 27-136 (PQET…VAVV), 142-228 (EDFS…ASLT), 241-329 (QDVV…AELR), and 334-420 (PAIS…APLA). Intrachain disulfides connect Cys55/Cys120 and Cys163/Cys211. Asn88 is a glycosylation site (N-linked (GlcNAc...) asparagine). Asn251 is a glycosylation site (N-linked (GlcNAc...) asparagine). 2 disulfides stabilise this stretch: Cys264–Cys311 and Cys355–Cys404. 5 consecutive Fibronectin type-III domains span residues 430 to 524 (APTR…TLDD), 526 to 622 (PSAA…TPGV), 631 to 742 (APAE…TPDL), 751 to 844 (PPAH…TLPD), and 849 to 944 (PPSD…TLQK). Positions 669-688 (TEEEADGDRPPGGRGDQAWD) are disordered. The chain crosses the membrane as a helical span at residues 957 to 977 (GIIVGVCLGLLCLLACMCAGL). Over 978–1252 (RRSSHREALP…RAPVSSAQVP (275 aa)) the chain is Cytoplasmic. Thr994 is modified (phosphothreonine).

Belongs to the immunoglobulin superfamily. DCC family. Expressed in skeletal muscle, heart and brain. Brain expression is hippocampus-specific.

Its subcellular location is the cell membrane. This chain is Immunoglobulin superfamily DCC subclass member 4 (Igdcc4), found in Mus musculus (Mouse).